A 108-amino-acid chain; its full sequence is ER membrane protein complex subunit 6 (108 aa).

3 helical membrane passes run 21–41, 45–65, and 86–106; these read VVSF…GILG, YEGL…LFAL, and ILDG…LVYV.

Belongs to the EMC6 family.

The protein resides in the endoplasmic reticulum membrane. This chain is ER membrane protein complex subunit 6, found in Schizosaccharomyces pombe (strain 972 / ATCC 24843) (Fission yeast).